A 362-amino-acid polypeptide reads, in one-letter code: Alcohol dehydrogenase 13 (362 aa).

Zn(2+) is bound by residues C51, H73, C104, C107, C110, C118, and C168. H73 lines the substrate pocket. NAD(+)-binding positions include G193 to G198 and V280 to A282.

Belongs to the zinc-containing alcohol dehydrogenase family. Class-III subfamily. As to quaternary structure, homodimer. Requires Zn(2+) as cofactor.

The sequence is that of Alcohol dehydrogenase 13 from Catharanthus roseus (Madagascar periwinkle).